Consider the following 621-residue polypeptide: tRNA 5-methylaminomethyl-2-thiouridine biosynthesis bifunctional protein MnmC (621 aa).

The tRNA (mnm(5)s(2)U34)-methyltransferase stretch occupies residues 1–222; it reads MKNANLSFKG…KRQMSSAVLE (222 aa). Residues 250-621 form an FAD-dependent cmnm(5)s(2)U34 oxidoreductase region; it reads IGTGVAGLAT…LIRKLKKGLK (372 aa).

The protein in the N-terminal section; belongs to the methyltransferase superfamily. tRNA (mnm(5)s(2)U34)-methyltransferase family. In the C-terminal section; belongs to the DAO family. FAD is required as a cofactor.

It is found in the cytoplasm. The enzyme catalyses 5-aminomethyl-2-thiouridine(34) in tRNA + S-adenosyl-L-methionine = 5-methylaminomethyl-2-thiouridine(34) in tRNA + S-adenosyl-L-homocysteine + H(+). Functionally, catalyzes the last two steps in the biosynthesis of 5-methylaminomethyl-2-thiouridine (mnm(5)s(2)U) at the wobble position (U34) in tRNA. Catalyzes the FAD-dependent demodification of cmnm(5)s(2)U34 to nm(5)s(2)U34, followed by the transfer of a methyl group from S-adenosyl-L-methionine to nm(5)s(2)U34, to form mnm(5)s(2)U34. In Campylobacter concisus (strain 13826), this protein is tRNA 5-methylaminomethyl-2-thiouridine biosynthesis bifunctional protein MnmC.